The primary structure comprises 336 residues: N-acetyl-gamma-glutamyl-phosphate reductase (336 aa).

C156 is a catalytic residue.

The protein belongs to the NAGSA dehydrogenase family. Type 1 subfamily.

Its subcellular location is the cytoplasm. It catalyses the reaction N-acetyl-L-glutamate 5-semialdehyde + phosphate + NADP(+) = N-acetyl-L-glutamyl 5-phosphate + NADPH + H(+). It participates in amino-acid biosynthesis; L-arginine biosynthesis; N(2)-acetyl-L-ornithine from L-glutamate: step 3/4. In terms of biological role, catalyzes the NADPH-dependent reduction of N-acetyl-5-glutamyl phosphate to yield N-acetyl-L-glutamate 5-semialdehyde. The polypeptide is N-acetyl-gamma-glutamyl-phosphate reductase (Moritella profunda).